We begin with the raw amino-acid sequence, 182 residues long: Probable RNA 2'-phosphotransferase (182 aa).

It belongs to the KptA/TPT1 family.

In terms of biological role, removes the 2'-phosphate from RNA via an intermediate in which the phosphate is ADP-ribosylated by NAD followed by a presumed transesterification to release the RNA and generate ADP-ribose 1''-2''-cyclic phosphate (APPR&gt;P). May function as an ADP-ribosylase. This chain is Probable RNA 2'-phosphotransferase, found in Pseudomonas fluorescens (strain ATCC BAA-477 / NRRL B-23932 / Pf-5).